The primary structure comprises 314 residues: Malate dehydrogenase (314 aa).

NAD(+) is bound by residues 13-18 (GGGQIG) and D37. The substrate site is built by R88 and R94. NAD(+) contacts are provided by residues N101 and 124 to 126 (VAN). 2 residues coordinate substrate: N126 and R157. The active-site Proton acceptor is H181.

It belongs to the LDH/MDH superfamily. MDH type 3 family.

The enzyme catalyses (S)-malate + NAD(+) = oxaloacetate + NADH + H(+). Functionally, catalyzes the reversible oxidation of malate to oxaloacetate. The protein is Malate dehydrogenase of Myxococcus xanthus.